We begin with the raw amino-acid sequence, 146 residues long: Lysozyme-like protein 4 (146 aa).

Positions 1-19 (MKASVVLSLLGYLVVPSGA) are cleaved as a signal peptide. The 127-residue stretch at 20–146 (YILGRCTVAK…LARWLDGCKL (127 aa)) folds into the C-type lysozyme domain. 4 disulfide bridges follow: Cys25–Cys144, Cys49–Cys131, Cys84–Cys96, and Cys92–Cys110. The active site involves Glu54.

It belongs to the glycosyl hydrolase 22 family. In terms of assembly, monomer. As to expression, expressed in testis and epididymis.

The protein resides in the secreted. Its subcellular location is the cytoplasmic vesicle. The protein localises to the secretory vesicle. It is found in the acrosome. It localises to the cell projection. The protein resides in the cilium. Its subcellular location is the flagellum. Functionally, may be involved in fertilization. Has no detectable bacteriolytic and lysozyme activities in vitro. In Homo sapiens (Human), this protein is Lysozyme-like protein 4 (LYZL4).